The chain runs to 293 residues: Ribosomal RNA small subunit methyltransferase A (293 aa).

Residues Asn-38, Val-40, Gly-65, Glu-86, Asp-116, and Asn-135 each contribute to the S-adenosyl-L-methionine site.

This sequence belongs to the class I-like SAM-binding methyltransferase superfamily. rRNA adenine N(6)-methyltransferase family. RsmA subfamily.

It is found in the cytoplasm. The catalysed reaction is adenosine(1518)/adenosine(1519) in 16S rRNA + 4 S-adenosyl-L-methionine = N(6)-dimethyladenosine(1518)/N(6)-dimethyladenosine(1519) in 16S rRNA + 4 S-adenosyl-L-homocysteine + 4 H(+). In terms of biological role, specifically dimethylates two adjacent adenosines (A1518 and A1519) in the loop of a conserved hairpin near the 3'-end of 16S rRNA in the 30S particle. May play a critical role in biogenesis of 30S subunits. The polypeptide is Ribosomal RNA small subunit methyltransferase A (Nocardia farcinica (strain IFM 10152)).